The sequence spans 432 residues: Adenylosuccinate synthetase (432 aa).

Residues 12-18 (GDEGKGK) and 40-42 (GHT) contribute to the GTP site. Residue Asp-13 is the Proton acceptor of the active site. Mg(2+)-binding residues include Asp-13 and Gly-40. IMP contacts are provided by residues 13–16 (DEGK), 38–41 (NAGH), Thr-132, Arg-146, Gln-226, Thr-241, and Arg-305. His-41 serves as the catalytic Proton donor. Substrate is bound at residue 301 to 307 (TVTGRKR). GTP-binding positions include Arg-307, 333–335 (KLD), and 415–417 (STS).

It belongs to the adenylosuccinate synthetase family. In terms of assembly, homodimer. Mg(2+) is required as a cofactor.

Its subcellular location is the cytoplasm. It carries out the reaction IMP + L-aspartate + GTP = N(6)-(1,2-dicarboxyethyl)-AMP + GDP + phosphate + 2 H(+). The protein operates within purine metabolism; AMP biosynthesis via de novo pathway; AMP from IMP: step 1/2. Its function is as follows. Plays an important role in the de novo pathway of purine nucleotide biosynthesis. Catalyzes the first committed step in the biosynthesis of AMP from IMP. The chain is Adenylosuccinate synthetase from Sinorhizobium fredii (strain NBRC 101917 / NGR234).